Reading from the N-terminus, the 173-residue chain is Large ribosomal subunit protein uL5 (173 aa).

It belongs to the universal ribosomal protein uL5 family. In terms of assembly, part of the 50S ribosomal subunit; contacts the 5S rRNA and probably tRNA. Forms a bridge to the 30S subunit in the 70S ribosome.

In terms of biological role, this is one of the proteins that bind and probably mediate the attachment of the 5S RNA into the large ribosomal subunit, where it forms part of the central protuberance. In the 70S ribosome it contacts protein S13 of the 30S subunit (bridge B1b), connecting the 2 subunits; this bridge is implicated in subunit movement. May contact the P site tRNA; the 5S rRNA and some of its associated proteins might help stabilize positioning of ribosome-bound tRNAs. This chain is Large ribosomal subunit protein uL5, found in Nitrosopumilus maritimus (strain SCM1).